A 447-amino-acid chain; its full sequence is MREILHIQGGQCGNQIGAKFWEVVCDEHGIDPTGRYTGTSDLQLERVNVYYNEASCGRFVPRAVLMDLEPGTMDSVRTGPYGQIFRPDNFVFGQSGAGNNWAKGHYTEGAELIDSVLDVVRKEAENCDCLQGFQVCHSLGGGTGSGMGTLLISKIREEYPDRMMLTFSVFPSPKVSDTVVEPYNATLSVHQLVENADECMVLDNEALYDICFRTLKLTTPSFGDLNHLISATMSGVTCCLRFPGQLNSDLRKLAVNLIPFPRLHFFMVGFAPLTSRGSQQYRALTVPELTQQMWDAKNMMCAADPRHGRYLTASAMFRGKMSTKEVDEQMINVQNKNSSYFVEWIPNNVKSSVCDIPPTGLSMASTFVGNSTSIQEMFRRVSEQFTAMFRRKAFLHWYTGEGMDEMEFTEAESNMNDLVSEYQQYQDATADEEGEYEDEDQEAEDDM.

Gln-11, Glu-69, Ser-138, Gly-142, Thr-143, Gly-144, Asn-204, and Asn-226 together coordinate GTP. Residue Glu-69 coordinates Mg(2+). The disordered stretch occupies residues 419–447 (VSEYQQYQDATADEEGEYEDEDQEAEDDM). Residues 429–447 (TADEEGEYEDEDQEAEDDM) show a composition bias toward acidic residues.

This sequence belongs to the tubulin family. Dimer of alpha and beta chains. A typical microtubule is a hollow water-filled tube with an outer diameter of 25 nm and an inner diameter of 15 nM. Alpha-beta heterodimers associate head-to-tail to form protofilaments running lengthwise along the microtubule wall with the beta-tubulin subunit facing the microtubule plus end conferring a structural polarity. Microtubules usually have 13 protofilaments but different protofilament numbers can be found in some organisms and specialized cells. Requires Mg(2+) as cofactor.

It is found in the cytoplasm. Its subcellular location is the cytoskeleton. Its function is as follows. Tubulin is the major constituent of microtubules, a cylinder consisting of laterally associated linear protofilaments composed of alpha- and beta-tubulin heterodimers. Microtubules grow by the addition of GTP-tubulin dimers to the microtubule end, where a stabilizing cap forms. Below the cap, tubulin dimers are in GDP-bound state, owing to GTPase activity of alpha-tubulin. The sequence is that of Tubulin beta chain (TUBB) from Hordeum vulgare (Barley).